The primary structure comprises 89 residues: Large ribosomal subunit protein bL27 (89 aa).

Residues 1–21 (MAHKKAGGSSRNGRDSKGKRL) are disordered.

Belongs to the bacterial ribosomal protein bL27 family.

This Bradyrhizobium sp. (strain ORS 278) protein is Large ribosomal subunit protein bL27.